Here is a 75-residue protein sequence, read N- to C-terminus: Peptide Ctri9610 (75 aa).

The first 22 residues, 1–22 (MNSKYLFVFLILNVIFIDLCQG), serve as a signal peptide directing secretion. The residue at position 41 (Lys-41) is a Lysine amide. Residues 42-75 (GTRRRELGSQYDYLQDFRKRELDLDDLLSKFPDY) constitute a propeptide that is removed on maturation.

This sequence belongs to the non-disulfide-bridged peptide (NDBP) superfamily. Short antimicrobial peptide (group 4) family. As to expression, expressed by the venom gland.

It is found in the secreted. This Chaerilus tricostatus (Scorpion) protein is Peptide Ctri9610.